A 602-amino-acid chain; its full sequence is Elongation factor 4 (602 aa).

In terms of domain architecture, tr-type G spans R7–Q189. GTP-binding positions include D19–T24 and N136–D139.

Belongs to the TRAFAC class translation factor GTPase superfamily. Classic translation factor GTPase family. LepA subfamily.

It localises to the cell inner membrane. The enzyme catalyses GTP + H2O = GDP + phosphate + H(+). Required for accurate and efficient protein synthesis under certain stress conditions. May act as a fidelity factor of the translation reaction, by catalyzing a one-codon backward translocation of tRNAs on improperly translocated ribosomes. Back-translocation proceeds from a post-translocation (POST) complex to a pre-translocation (PRE) complex, thus giving elongation factor G a second chance to translocate the tRNAs correctly. Binds to ribosomes in a GTP-dependent manner. The protein is Elongation factor 4 of Xylella fastidiosa (strain 9a5c).